The following is a 504-amino-acid chain: D-alanine--D-alanyl carrier protein ligase (504 aa).

Thr152–Ser153 provides a ligand contact to ATP. Residue Asp197 coordinates D-alanine. Position 292–297 (Asn292–Thr297) interacts with ATP. A D-alanine-binding site is contributed by Val301. Residues Asp383, Tyr394–Arg397, and Lys492 contribute to the ATP site. Residue Lys492 coordinates D-alanine.

This sequence belongs to the ATP-dependent AMP-binding enzyme family. DltA subfamily.

Its subcellular location is the cytoplasm. It catalyses the reaction holo-[D-alanyl-carrier protein] + D-alanine + ATP = D-alanyl-[D-alanyl-carrier protein] + AMP + diphosphate. Its pathway is cell wall biogenesis; lipoteichoic acid biosynthesis. Functionally, catalyzes the first step in the D-alanylation of lipoteichoic acid (LTA), the activation of D-alanine and its transfer onto the D-alanyl carrier protein (Dcp) DltC. In an ATP-dependent two-step reaction, forms a high energy D-alanyl-AMP intermediate, followed by transfer of the D-alanyl residue as a thiol ester to the phosphopantheinyl prosthetic group of the Dcp. D-alanylation of LTA plays an important role in modulating the properties of the cell wall in Gram-positive bacteria, influencing the net charge of the cell wall. The sequence is that of D-alanine--D-alanyl carrier protein ligase from Bacillus cereus (strain G9842).